We begin with the raw amino-acid sequence, 263 residues long: uncharacterized protein (263 aa).

The first 22 residues, 1–22, serve as a signal peptide directing secretion; sequence MRYLKRVVLYRIVMVLSVFIIG. Cysteine 23 is lipidated: N-palmitoyl cysteine. The S-diacylglycerol cysteine moiety is linked to residue cysteine 23.

It belongs to the staphylococcal tandem lipoprotein family.

It is found in the cell membrane. This is an uncharacterized protein from Staphylococcus aureus (strain bovine RF122 / ET3-1).